Reading from the N-terminus, the 325-residue chain is Eukaryotic translation initiation factor 3 subunit I (325 aa).

WD repeat units follow at residues 8–47 (GHER…RLGT), 50–89 (GHTG…QLAL), 144–183 (CSES…VLKK), 186–225 (EHTK…HVKT), and 283–324 (GHFG…FELE).

It belongs to the eIF-3 subunit I family. In terms of assembly, component of the eukaryotic translation initiation factor 3 (eIF-3) complex, which is composed of 13 subunits: eif3a, eif3b, eif3c, eif3d, eif3e, eif3f, eif3g, eif3h, eif3i, eif3j, eif3k, eif3l and eif3m.

The protein resides in the cytoplasm. Component of the eukaryotic translation initiation factor 3 (eIF-3) complex, which is involved in protein synthesis of a specialized repertoire of mRNAs and, together with other initiation factors, stimulates binding of mRNA and methionyl-tRNAi to the 40S ribosome. The eIF-3 complex specifically targets and initiates translation of a subset of mRNAs involved in cell proliferation. In Danio rerio (Zebrafish), this protein is Eukaryotic translation initiation factor 3 subunit I (eif3i).